A 272-amino-acid polypeptide reads, in one-letter code: Phosphatidylglycerol--prolipoprotein diacylglyceryl transferase (272 aa).

The next 4 helical transmembrane spans lie at 24-44, 64-84, 99-119, and 125-145; these read WYAL…RHLV, LLVY…VVFY, LWQG…GVML, and GLPT…GLFL. Arginine 147 is a binding site for a 1,2-diacyl-sn-glycero-3-phospho-(1'-sn-glycerol). 3 helical membrane-spanning segments follow: residues 185–205, 209–229, and 245–265; these read AAAE…LGAL, GLVT…CEFF, and MGML…AFAY.

It belongs to the Lgt family.

The protein resides in the cell inner membrane. The catalysed reaction is L-cysteinyl-[prolipoprotein] + a 1,2-diacyl-sn-glycero-3-phospho-(1'-sn-glycerol) = an S-1,2-diacyl-sn-glyceryl-L-cysteinyl-[prolipoprotein] + sn-glycerol 1-phosphate + H(+). Its pathway is protein modification; lipoprotein biosynthesis (diacylglyceryl transfer). Functionally, catalyzes the transfer of the diacylglyceryl group from phosphatidylglycerol to the sulfhydryl group of the N-terminal cysteine of a prolipoprotein, the first step in the formation of mature lipoproteins. This Methylocella silvestris (strain DSM 15510 / CIP 108128 / LMG 27833 / NCIMB 13906 / BL2) protein is Phosphatidylglycerol--prolipoprotein diacylglyceryl transferase.